The primary structure comprises 150 residues: Male-specific protein scotti (150 aa).

The segment at 60 to 84 (PPMAVFPARGGPNGGPPRLRKKRSF) is disordered. N-linked (GlcNAc...) asparagine glycosylation occurs at Asn131.

It belongs to the male-specific scotti family.

Post-meiotically transcribed gene that has a role in late spermiogenesis; required for actin cone progression during spermatid individualization. In Drosophila yakuba (Fruit fly), this protein is Male-specific protein scotti.